The following is a 64-amino-acid chain: UPF0370 protein YPA_2246 (64 aa).

The helical transmembrane segment at 3–23 (WLADYWWIILILLVGMILNGI) threads the bilayer. The span at 36–47 (DNKPELPPHRDN) shows a compositional bias: basic and acidic residues. Positions 36 to 64 (DNKPELPPHRDNNAQWDDEDDWPDQNKKK) are disordered.

This sequence belongs to the UPF0370 family.

It localises to the cell membrane. This chain is UPF0370 protein YPA_2246, found in Yersinia pestis bv. Antiqua (strain Antiqua).